The following is a 111-amino-acid chain: uncharacterized protein (111 aa).

The next 2 membrane-spanning stretches (helical) occupy residues 45–65 and 91–111; these read AFLI…LLVI and LPAG…ILHI.

The protein resides in the cell membrane. This is an uncharacterized protein from Methanothermobacter thermautotrophicus (strain ATCC 29096 / DSM 1053 / JCM 10044 / NBRC 100330 / Delta H) (Methanobacterium thermoautotrophicum).